We begin with the raw amino-acid sequence, 211 residues long: Bifunctional transcriptional activator/DNA repair enzyme AdaA (211 aa).

The Nucleophile; methyl group acceptor from methylphosphotriester role is filled by Cys-54. Zn(2+) is bound by residues Cys-54, Cys-58, Cys-85, and Cys-88. Positions 102–200 (DLITEYIDKN…GQTPARFRQM (99 aa)) constitute an HTH araC/xylS-type domain. A DNA-binding region (H-T-H motif) is located at residues 119 to 140 (ESLADICHGSPYHMHRTFKKIK).

It depends on Zn(2+) as a cofactor.

It carries out the reaction (2'-deoxyribonucleoside 5'-methylphosphotriester)-DNA + L-cysteinyl-[protein] = 2'-deoxyribonucleotide-DNA + S-methyl-L-cysteinyl-[protein] + H(+). In terms of biological role, is involved in the adaptive response to alkylation damage in DNA caused by alkylating agents. Repairs the methylphosphotriester lesions in DNA by a direct and irreversible transfer of the methyl group to one of its own cysteine residues. Functionally, the methylation of AdaA by methylphosphotriesters in DNA leads to its activation as a transcriptional regulator that activates the transcription of the ada operon which consists of adaA and adaB, and of the adjacent gene alkA. In Bacillus subtilis (strain 168), this protein is Bifunctional transcriptional activator/DNA repair enzyme AdaA (adaA).